The chain runs to 455 residues: Squamosa promoter-binding-like protein 16 (455 aa).

Residues 115 to 192 form an SBP-type zinc finger; it reads CPSCAVDGCK…DGHNRRRRKP (78 aa). Residues C118, C123, C140, H143, C159, C162, H166, and C178 each coordinate Zn(2+). The Bipartite nuclear localization signal motif lies at 175–191; the sequence is KRSCRKRLDGHNRRRRK. The tract at residues 182 to 204 is disordered; that stretch reads LDGHNRRRRKPQPDPMNSASYLA.

Expressed in young panicles.

The protein localises to the nucleus. Its function is as follows. Trans-acting factor that binds specifically to the consensus nucleotide sequence 5'-TNCGTACAA-3'. May be involved in panicle development. The polypeptide is Squamosa promoter-binding-like protein 16 (SPL16) (Oryza sativa subsp. japonica (Rice)).